The following is a 266-amino-acid chain: Early E1A protein (266 aa).

An interaction with RB1 in competition with E2F1 region spans residues 39 to 47; that stretch reads PSLYELYDL. The tract at residues 75–145 is interaction with UBE2I; sequence EGLFLPEPPV…AAAAADRERE (71 aa). Positions 98-102 match the PXLXP motif, interaction with host ZMYND11 motif; that stretch reads PQLHP. An LXCXE motif, interaction with host RB1 and TMEM173/STING motif is present at residues 107–111; sequence LLCYE. The segment at 159 to 179 is a zinc-finger region; sequence CKSCEHHRNSTGNTDLMCSLC. The tract at residues 195–226 is disordered; that stretch reads NEPEPNSTLDGDERPSPPKLGSAVPEGVIKPV. The short motif at 255 to 259 is the PXDLS motif, CTBP-binding element; that stretch reads PVDLS. The Nuclear localization signal signature appears at 261-265; the sequence is KRPRC.

The protein belongs to the adenoviridae E1A protein family. In terms of assembly, interacts with host UBE2I; this interaction interferes with polySUMOylation. Interacts with host RB1; this interaction induces the aberrant dissociation of RB1-E2F1 complex thereby disrupting the activity of RB1 and activating E2F1-regulated genes. Interacts with host ATF7; the interaction enhances ATF7-mediated viral transactivation activity which requires the zinc binding domains of both proteins. Isoform early E1A 32 kDa protein and isoform early E1A 26 kDa protein interact (via N-terminus) with CUL1 and E3 ubiquitin ligase RBX1; these interactions inhibit RBX1-CUL1-dependent elongation reaction of ubiquitin chains and attenuate ubiquitination of SCF(FBXW7) target proteins. Interacts (via PXLXP motif) with host ZMYND11/BS69 (via MYND-type zinc finger); this interaction inhibits E1A mediated transactivation. Interacts with host EP300; this interaction stimulates the acetylation of RB1 by recruiting EP300 and RB1 into a multimeric-protein complex. Interacts with host CTBP1 and CTBP2; this interaction seems to potentiate viral replication. Interacts with host DCAF7. Interacts with host DYRK1A. Interacts with host KPNA4; this interaction allows E1A import into the host nucleus. Interacts with host EP400; this interaction stabilizes MYC. Interacts with host TBP protein; this interaction probably disrupts the TBP-TATA complex. Interacts (via LXCXE motif) with host TMEM173/STING; this interaction impairs the ability of TMEM173/STING to sense cytosolic DNA and promote the production of type I interferon (IFN-alpha and IFN-beta). Interacts (via C-terminus) with host ZBED1/hDREF (via C-terminus); the interaction is direct.

Its subcellular location is the host nucleus. In terms of biological role, plays a role in viral genome replication by driving entry of quiescent cells into the cell cycle. Stimulation of progression from G1 to S phase allows the virus to efficiently use the cellular DNA replicating machinery to achieve viral genome replication. E1A protein has both transforming and trans-activating activities. Induces the disassembly of the E2F1 transcription factor from RB1 by direct competition for the same binding site on RB1, with subsequent transcriptional activation of E2F1-regulated S-phase genes and of the E2 region of the adenoviral genome. Release of E2F1 leads to the ARF-mediated inhibition of MDM2 and causes TP53/p53 to accumulate because it is not targeted for degradation by MDM2-mediated ubiquitination anymore. This increase in TP53, in turn, would arrest the cell proliferation and direct its death but this effect is counteracted by the viral protein E1B-55K. Inactivation of the ability of RB1 to arrest the cell cycle is critical for cellular transformation, uncontrolled cellular growth and proliferation induced by viral infection. Interaction with RBX1 and CUL1 inhibits ubiquitination of the proteins targeted by SCF(FBXW7) ubiquitin ligase complex, and may be linked to unregulated host cell proliferation. The tumorigenesis-restraining activity of E1A may be related to the disruption of the host CtBP-CtIP complex through the CtBP binding motif. Interaction with host TMEM173/STING impairs the ability of TMEM173/STING to sense cytosolic DNA and promote the production of type I interferon (IFN-alpha and IFN-beta). Promotes the sumoylation of host ZBED1/hDREF with SUMO1. The sequence is that of Early E1A protein from Homo sapiens (Human).